The chain runs to 299 residues: Dye-decolorizing peroxidase YfeX (299 aa).

Catalysis depends on D143, which acts as the Proton acceptor. H215 contacts heme.

Belongs to the DyP-type peroxidase family. Heme b serves as cofactor.

The protein localises to the cytoplasm. Functionally, has both general peroxidase activity and dye-decolorizing activity. Can catalyze the oxidation of both protoporphyrinogen IX and coproporphyrinogen III to their corresponding porphyrins. Also efficiently decolorizes the dyes alizarin red and Cibacron blue F3GA. The chain is Dye-decolorizing peroxidase YfeX (yfeX) from Escherichia coli (strain K12).